Reading from the N-terminus, the 590-residue chain is Aspartate--tRNA(Asp/Asn) ligase (590 aa).

Glu-176 contacts L-aspartate. The interval 200-203 (QLFK) is aspartate. 2 residues coordinate L-aspartate: Arg-222 and His-451. 222–224 (RDE) contributes to the ATP binding site. Position 485 (Glu-485) interacts with ATP. Arg-492 contacts L-aspartate. 537–540 (GIDR) provides a ligand contact to ATP.

Belongs to the class-II aminoacyl-tRNA synthetase family. Type 1 subfamily. As to quaternary structure, homodimer.

The protein resides in the cytoplasm. It catalyses the reaction tRNA(Asx) + L-aspartate + ATP = L-aspartyl-tRNA(Asx) + AMP + diphosphate. Aspartyl-tRNA synthetase with relaxed tRNA specificity since it is able to aspartylate not only its cognate tRNA(Asp) but also tRNA(Asn). Reaction proceeds in two steps: L-aspartate is first activated by ATP to form Asp-AMP and then transferred to the acceptor end of tRNA(Asp/Asn). The sequence is that of Aspartate--tRNA(Asp/Asn) ligase from Ehrlichia chaffeensis (strain ATCC CRL-10679 / Arkansas).